We begin with the raw amino-acid sequence, 709 residues long: Elongation factor G (709 aa).

Residues asparagine 10 to glutamate 295 enclose the tr-type G domain. GTP is bound by residues alanine 19–threonine 26, aspartate 91–histidine 95, and asparagine 145–aspartate 148.

This sequence belongs to the TRAFAC class translation factor GTPase superfamily. Classic translation factor GTPase family. EF-G/EF-2 subfamily.

The protein resides in the cytoplasm. In terms of biological role, catalyzes the GTP-dependent ribosomal translocation step during translation elongation. During this step, the ribosome changes from the pre-translocational (PRE) to the post-translocational (POST) state as the newly formed A-site-bound peptidyl-tRNA and P-site-bound deacylated tRNA move to the P and E sites, respectively. Catalyzes the coordinated movement of the two tRNA molecules, the mRNA and conformational changes in the ribosome. The protein is Elongation factor G of Bifidobacterium animalis subsp. lactis (strain AD011).